A 491-amino-acid polypeptide reads, in one-letter code: UDP-N-acetylmuramate--L-alanine ligase (491 aa).

126 to 132 (GTHGKTT) provides a ligand contact to ATP.

This sequence belongs to the MurCDEF family.

The protein localises to the cytoplasm. It carries out the reaction UDP-N-acetyl-alpha-D-muramate + L-alanine + ATP = UDP-N-acetyl-alpha-D-muramoyl-L-alanine + ADP + phosphate + H(+). Its pathway is cell wall biogenesis; peptidoglycan biosynthesis. Cell wall formation. The protein is UDP-N-acetylmuramate--L-alanine ligase of Salmonella gallinarum (strain 287/91 / NCTC 13346).